Consider the following 311-residue polypeptide: Energy-coupling factor transporter ATP-binding protein EcfA (311 aa).

One can recognise an ABC transporter domain in the interval 2–237 (IELRDLSYSY…AELIRRASLR (236 aa)). 35–42 (GPNGAGKS) serves as a coordination point for ATP.

The protein belongs to the ABC transporter superfamily. Energy-coupling factor EcfA family. In terms of assembly, forms a stable energy-coupling factor (ECF) transporter complex composed of 2 membrane-embedded substrate-binding proteins (S component), 2 ATP-binding proteins (A component) and 2 transmembrane proteins (T component).

It is found in the cell membrane. Its function is as follows. ATP-binding (A) component of a common energy-coupling factor (ECF) ABC-transporter complex. Unlike classic ABC transporters this ECF transporter provides the energy necessary to transport a number of different substrates. This Methanothermobacter thermautotrophicus (strain ATCC 29096 / DSM 1053 / JCM 10044 / NBRC 100330 / Delta H) (Methanobacterium thermoautotrophicum) protein is Energy-coupling factor transporter ATP-binding protein EcfA.